The primary structure comprises 119 residues: NAD(P)H-quinone oxidoreductase subunit M (119 aa).

Belongs to the complex I NdhM subunit family. NDH-1 can be composed of about 15 different subunits; different subcomplexes with different compositions have been identified which probably have different functions.

It localises to the cellular thylakoid membrane. The enzyme catalyses a plastoquinone + NADH + (n+1) H(+)(in) = a plastoquinol + NAD(+) + n H(+)(out). It catalyses the reaction a plastoquinone + NADPH + (n+1) H(+)(in) = a plastoquinol + NADP(+) + n H(+)(out). In terms of biological role, NDH-1 shuttles electrons from an unknown electron donor, via FMN and iron-sulfur (Fe-S) centers, to quinones in the respiratory and/or the photosynthetic chain. The immediate electron acceptor for the enzyme in this species is believed to be plastoquinone. Couples the redox reaction to proton translocation, and thus conserves the redox energy in a proton gradient. Cyanobacterial NDH-1 also plays a role in inorganic carbon-concentration. This is NAD(P)H-quinone oxidoreductase subunit M from Picosynechococcus sp. (strain ATCC 27264 / PCC 7002 / PR-6) (Agmenellum quadruplicatum).